We begin with the raw amino-acid sequence, 119 residues long: Large ribosomal subunit protein uL24 (119 aa).

The protein belongs to the universal ribosomal protein uL24 family. Part of the 50S ribosomal subunit.

Its function is as follows. One of two assembly initiator proteins, it binds directly to the 5'-end of the 23S rRNA, where it nucleates assembly of the 50S subunit. Located at the polypeptide exit tunnel on the outside of the subunit. The protein is Large ribosomal subunit protein uL24 of Haloquadratum walsbyi (strain DSM 16790 / HBSQ001).